A 185-amino-acid polypeptide reads, in one-letter code: Ribosome-recycling factor (185 aa).

It belongs to the RRF family.

The protein resides in the cytoplasm. Functionally, responsible for the release of ribosomes from messenger RNA at the termination of protein biosynthesis. May increase the efficiency of translation by recycling ribosomes from one round of translation to another. This Shewanella woodyi (strain ATCC 51908 / MS32) protein is Ribosome-recycling factor.